Reading from the N-terminus, the 212-residue chain is Thymidylate kinase (212 aa).

An ATP-binding site is contributed by 10–17; sequence GLEGAGKT.

This sequence belongs to the thymidylate kinase family.

It carries out the reaction dTMP + ATP = dTDP + ADP. Functionally, phosphorylation of dTMP to form dTDP in both de novo and salvage pathways of dTTP synthesis. In Yersinia pestis bv. Antiqua (strain Antiqua), this protein is Thymidylate kinase.